A 436-amino-acid polypeptide reads, in one-letter code: GTPase Der (436 aa).

EngA-type G domains follow at residues 4 to 167 (PTIA…PNEE) and 175 to 351 (IKFS…QSQN). Residues 10 to 17 (GRPNVGKS), 57 to 61 (DTGGI), 119 to 122 (NKVD), 181 to 188 (GRPNVGKS), 229 to 233 (DTAGM), and 294 to 297 (NKWD) each bind GTP. A KH-like domain is found at 352 to 436 (TRIPSAVLND…PIHLIARKRK (85 aa)).

It belongs to the TRAFAC class TrmE-Era-EngA-EngB-Septin-like GTPase superfamily. EngA (Der) GTPase family. In terms of assembly, associates with the 50S ribosomal subunit.

In terms of biological role, GTPase that plays an essential role in the late steps of ribosome biogenesis. The sequence is that of GTPase Der from Streptococcus gordonii (strain Challis / ATCC 35105 / BCRC 15272 / CH1 / DL1 / V288).